A 307-amino-acid chain; its full sequence is Sporulation sigma-E factor-processing peptidase (307 aa).

The next 5 helical transmembrane spans lie at 7-27, 36-56, 57-77, 89-109, and 127-147; these read LIWMLNFGLDTILLMLCAVVL, LLLGGFIGSLIVLLMFTPFSH, LMVHPAIKILFSFFMVLMTFG, LTFYFATFVVGGGLMGVHFLF, and FGDPISWIFVLIGFPLLSYFS. Residue aspartate 183 is part of the active site.

Belongs to the peptidase U4 family. Self-associates. Interacts with SigE. Interacts with SpoIIR.

The protein localises to the cell membrane. Functionally, probable aspartic protease that is responsible for the proteolytic cleavage of the RNA polymerase sigma E factor (SigE/spoIIGB) to yield the active peptide in the mother cell during sporulation. Responds to a signal from the forespore that is triggered by the extracellular signal protein SpoIIR. The sequence is that of Sporulation sigma-E factor-processing peptidase from Priestia megaterium (strain ATCC 12872 / QMB1551) (Bacillus megaterium).